The primary structure comprises 507 residues: Probable DNA ligase (507 aa).

Glutamate 209 serves as a coordination point for ATP. Lysine 211 serves as the catalytic N6-AMP-lysine intermediate. The ATP site is built by arginine 216, arginine 231, glutamate 260, phenylalanine 300, arginine 372, and lysine 378.

It belongs to the ATP-dependent DNA ligase family. Mg(2+) is required as a cofactor.

The catalysed reaction is ATP + (deoxyribonucleotide)n-3'-hydroxyl + 5'-phospho-(deoxyribonucleotide)m = (deoxyribonucleotide)n+m + AMP + diphosphate.. DNA ligase that seals nicks in double-stranded DNA during DNA replication, DNA recombination and DNA repair. The polypeptide is Probable DNA ligase (Mycobacterium bovis (strain ATCC BAA-935 / AF2122/97)).